A 151-amino-acid chain; its full sequence is Transcriptional regulator MraZ (151 aa).

2 SpoVT-AbrB domains span residues 5–52 (IHQV…PLSE) and 81–124 (ATDL…SQEE).

It belongs to the MraZ family. In terms of assembly, forms oligomers.

The protein localises to the cytoplasm. The protein resides in the nucleoid. The protein is Transcriptional regulator MraZ of Marinomonas sp. (strain MWYL1).